Here is an 846-residue protein sequence, read N- to C-terminus: cGMP-dependent protein kinase (846 aa).

The interval 1–22 (MRCNERNKKKAIFSNDDFSGED) is autoinhibitory segment. CNMP-binding domain regions lie at residues 51–166 (VCST…FIDS), 169–268 (VFDM…IVLG), 288–391 (IFRQ…LGDN), and 411–510 (IFRY…LQII). 6 residues coordinate 3',5'-cyclic GMP: Lys-106, Gly-115, Glu-116, Ala-118, Arg-125, and Ser-126. 3',5'-cyclic GMP is bound by residues Arg-466, Gly-475, Glu-476, Ala-478, Arg-485, and Thr-486. The region spanning 534-791 (LETERIIGRG…FKDIKEHAFF (258 aa)) is the Protein kinase domain. ATP contacts are provided by residues 540-548 (IGRGTFGTV) and Lys-563. The Proton acceptor role is filled by Asp-657. Residues 792–846 (GNFNWDKLAGRLLEPPLVSKGETYAEDIDIKQIEEEDALNEGEPLDGDDSWDVDF) enclose the AGC-kinase C-terminal domain. The interval 824–846 (IEEEDALNEGEPLDGDDSWDVDF) is disordered. Over residues 825-846 (EEEDALNEGEPLDGDDSWDVDF) the composition is skewed to acidic residues.

It belongs to the protein kinase superfamily. AGC Ser/Thr protein kinase family. cGMP subfamily. As to quaternary structure, monomer. Mg(2+) is required as a cofactor. Autophosphorylated.

The protein resides in the cytoplasm. Its subcellular location is the endoplasmic reticulum membrane. The catalysed reaction is L-seryl-[protein] + ATP = O-phospho-L-seryl-[protein] + ADP + H(+). The enzyme catalyses L-threonyl-[protein] + ATP = O-phospho-L-threonyl-[protein] + ADP + H(+). With respect to regulation, activated by cGMP. Not activated by cAMP. cGMP binding allosterically triggers a conformational change at the alpha C-helix of cGMP-binding domain 4, which bridges the regulatory and catalytic domains, causing the capping triad, composed of Arg-477, Gln-525 and Asp-526, to form and stabilize the active conformation. The cGMP-binding domains acts cooperatively to activate PKG. Functionally, serine/threonine protein kinase which acts as a downstream effector of the second messenger cGMP. Controls the release of Ca(2+) from intracellular stores by regulating phosphoinositide biosynthesis. Ca(2+) signals are essential for merozoite and sporozoite invasion and egress from host hepatocytes and erythrocytes, and, in the mosquito vector, for gametocyte activation, and ookinete and sporozoite motility. During the host liver stage, regulates the initial invasion of host hepatocytes by sporozoites by regulating sporozoite motility and microneme exocytosis. Following parasite development in the hepatocytes, required for the release of merosomes, a vesicle containing the mature merozoites. During the asexual blood stage, required for the progression from schizont to the ring stage following merozoite invasion of host erythrocytes and for merozoite egress. Regulates merozoite egress by promoting the release of exonemes and micronemes which contain proteins essential for egress. Phosphorylates CDPK1 predominantly at the late schizont stage; phosphorylation at 'Ser-64' regulates CDPK1 protein-protein interaction and phosphorylation at 'Thr-231' may regulate CDPK1 kinase activity. In the mosquito vector, required for the initiation of gametogenesis induced by xanthurenic acid, specifically the gametocyte differentiation from the crescent-shaped form to the spherical form. Required for the gliding motility of ookinetes to reach and penetrate the midgut epithelium by promoting Ca(2+)-mediated activation of CDPK1 and CDPK4. Also required for microneme secretion in ookinete by promoting Ca(2+)-mediated activation of CDPK3. The sequence is that of cGMP-dependent protein kinase from Plasmodium vivax (strain Salvador I).